The sequence spans 173 residues: Pathogenesis-related protein 1C (173 aa).

Positions 1 to 20 are cleaved as a signal peptide; the sequence is MSTSAVLFLLLAVFAAGASA.

This sequence belongs to the thaumatin family.

The protein is Pathogenesis-related protein 1C of Hordeum vulgare (Barley).